The sequence spans 258 residues: Large ribosomal subunit protein uL15c (258 aa).

A chloroplast-targeting transit peptide spans Met-1–Arg-65. Residues Arg-67–Ala-90 are disordered. Residues Ser-77–Arg-86 are compositionally biased toward basic residues.

The protein belongs to the universal ribosomal protein uL15 family. As to quaternary structure, part of the 50S ribosomal subunit.

Its subcellular location is the plastid. The protein resides in the chloroplast. This chain is Large ribosomal subunit protein uL15c (RPL15), found in Pisum sativum (Garden pea).